A 425-amino-acid polypeptide reads, in one-letter code: Sucrose-phosphatase 2 (425 aa).

The protein belongs to the sucrose phosphatase family. Homodimer. Mg(2+) is required as a cofactor.

The enzyme catalyses sucrose 6(F)-phosphate + H2O = sucrose + phosphate. It functions in the pathway glycan biosynthesis; sucrose biosynthesis; sucrose from D-fructose 6-phosphate and UDP-alpha-D-glucose: step 2/2. With respect to regulation, inhibited by EDTA. Catalyzes the final step of sucrose synthesis. This chain is Sucrose-phosphatase 2 (SPP2), found in Nicotiana tabacum (Common tobacco).